The primary structure comprises 225 residues: Chromosome partition protein MukE (225 aa).

The interval 197-225 (RDGEAMPIENHLQLNDETEENQPDSGEEE) is disordered. A compositionally biased stretch (acidic residues) spans 212-225 (DETEENQPDSGEEE).

This sequence belongs to the MukE family. As to quaternary structure, interacts, and probably forms a ternary complex, with MukF and MukB. The complex formation is stimulated by calcium or magnesium.

It localises to the cytoplasm. The protein resides in the nucleoid. Functionally, involved in chromosome condensation, segregation and cell cycle progression. May participate in facilitating chromosome segregation by condensation DNA from both sides of a centrally located replisome during cell division. Probably acts via its interaction with MukB and MukF. In Escherichia coli O157:H7, this protein is Chromosome partition protein MukE.